Consider the following 648-residue polypeptide: Acetyl-coenzyme A synthetase (648 aa).

CoA-binding positions include 190–193, threonine 308, and asparagine 332; that span reads RGGK. Residues 384–386, 408–413, aspartate 497, and arginine 512 contribute to the ATP site; these read GEP and DTWWQT. Serine 520 contacts CoA. Arginine 523 lines the ATP pocket. 3 residues coordinate Mg(2+): valine 534, histidine 536, and valine 539. Position 581 (arginine 581) interacts with CoA. Position 606 is an N6-acetyllysine (lysine 606).

The protein belongs to the ATP-dependent AMP-binding enzyme family. The cofactor is Mg(2+). Acetylated. Deacetylation by the SIR2-homolog deacetylase activates the enzyme.

It catalyses the reaction acetate + ATP + CoA = acetyl-CoA + AMP + diphosphate. In terms of biological role, catalyzes the conversion of acetate into acetyl-CoA (AcCoA), an essential intermediate at the junction of anabolic and catabolic pathways. AcsA undergoes a two-step reaction. In the first half reaction, AcsA combines acetate with ATP to form acetyl-adenylate (AcAMP) intermediate. In the second half reaction, it can then transfer the acetyl group from AcAMP to the sulfhydryl group of CoA, forming the product AcCoA. The polypeptide is Acetyl-coenzyme A synthetase (Bradyrhizobium diazoefficiens (strain JCM 10833 / BCRC 13528 / IAM 13628 / NBRC 14792 / USDA 110)).